We begin with the raw amino-acid sequence, 425 residues long: uncharacterized protein (425 aa).

An HD domain is found at 55–181; sequence RYSHSLGVYE…DLDADRMDYL (127 aa).

This is an uncharacterized protein from Mycoplasma pneumoniae (strain ATCC 29342 / M129 / Subtype 1) (Mycoplasmoides pneumoniae).